The chain runs to 196 residues: Cell division protein SepF (196 aa).

The segment at 15-80 is disordered; the sequence is VEDDEEFNEP…PKRSASTFSK (66 aa). Over residues 57-72 the composition is skewed to low complexity; the sequence is PAQTTPKPQTQTAAPK.

Belongs to the SepF family. In terms of assembly, homodimer. Interacts with FtsZ.

The protein resides in the cytoplasm. Cell division protein that is part of the divisome complex and is recruited early to the Z-ring. Probably stimulates Z-ring formation, perhaps through the cross-linking of FtsZ protofilaments. Its function overlaps with FtsA. This chain is Cell division protein SepF, found in Lactococcus lactis subsp. cremoris (strain MG1363).